The sequence spans 436 residues: Tubulin epsilon and delta complex protein 2 (436 aa).

2 disordered regions span residues 53–76 (ARTP…PSSQ) and 94–191 (VRKG…PSSA). The segment covering 111-131 (TSKAATSGAAAASHPRAPSRG) has biased composition (low complexity). Over residues 153 to 170 (DYPEHRLRSKGDKTHVRT) the composition is skewed to basic and acidic residues. Ser-161 is subject to Phosphoserine.

In terms of assembly, interacts with TEDC1. Found in a complex with TEDC1, TEDC2, TUBE1 and TUBD1.

It localises to the cell projection. The protein resides in the cilium. Its subcellular location is the cytoplasm. The protein localises to the cytoskeleton. It is found in the microtubule organizing center. It localises to the centrosome. The protein resides in the centriole. In terms of biological role, acts as a positive regulator of ciliary hedgehog signaling. Required for centriole stability. This is Tubulin epsilon and delta complex protein 2 from Mus musculus (Mouse).